Here is a 609-residue protein sequence, read N- to C-terminus: Serine/threonine-protein phosphatase 4 regulatory subunit 2 (609 aa).

A Phosphoserine modification is found at S68. The tract at residues N175 to T569 is disordered. A compositionally biased stretch (low complexity) spans G183 to A194. The segment covering R201–A225 has biased composition (basic and acidic residues). A phosphoserine mark is found at S223 and S226. Residues V233–K244 show a composition bias toward basic and acidic residues. S252 carries the post-translational modification Phosphoserine. Residues E258 to D270 show a composition bias toward acidic residues. 2 stretches are compositionally biased toward basic and acidic residues: residues I310–G351 and E375–D400. Residues I401–P410 show a composition bias toward acidic residues. Positions K414–A462 are enriched in basic and acidic residues. Phosphothreonine is present on T602. Residue S603 is modified to Phosphoserine.

Belongs to the PPP4R2 family. As to quaternary structure, serine/threonine-protein phosphatase 4 (PP4) occurs in different assemblies of the catalytic and one or more regulatory subunits. Probably part of a PP4 PPP4C-PPP4R2-PPP4R3 complex containing Pp4-19C, PPP4R2r and flfl.

Functionally, regulatory subunit of serine/threonine-protein phosphatase 4 (PP4). The probable PP4 complex Pp4-19C-PPP4R2r-flfl (PPP4C-PPP4R2-PPP4R3) is required to prevent caspase induced cell death (in vitro). The polypeptide is Serine/threonine-protein phosphatase 4 regulatory subunit 2 (PPP4R2r) (Drosophila melanogaster (Fruit fly)).